Consider the following 570-residue polypeptide: GTPase Obg (570 aa).

Residues 2 to 168 (SDFVDRVTVH…RDIILELKSI (167 aa)) form the Obg domain. A disordered region spans residues 15–43 (GDGGNGSAGIRREKYKPLAGPNGGNGGKG). An OBG-type G domain is found at 169–349 (ADVALVGFPS…LNFALAKLVK (181 aa)). Residues 175–182 (GFPSAGKS), 200–204 (FTTLV), 221–224 (DVPG), 301–304 (NKID), and 330–332 (STA) contribute to the GTP site. Mg(2+)-binding residues include S182 and T202. One can recognise an OCT domain in the interval 382-468 (GRNAQVREFE…ERAVAFDWDP (87 aa)). Positions 521–570 (RAAMQAERAAGHWADPSIDDDRHDEQSLFGRGEVEEYEDEPGADGSRQLD) are disordered.

It belongs to the TRAFAC class OBG-HflX-like GTPase superfamily. OBG GTPase family. In terms of assembly, monomer. Mg(2+) serves as cofactor.

Its subcellular location is the cytoplasm. An essential GTPase which binds GTP, GDP and possibly (p)ppGpp with moderate affinity, with high nucleotide exchange rates and a fairly low GTP hydrolysis rate. Plays a role in control of the cell cycle, stress response, ribosome biogenesis and in those bacteria that undergo differentiation, in morphogenesis control. This Bifidobacterium animalis subsp. lactis (strain AD011) protein is GTPase Obg.